The sequence spans 176 residues: Large ribosomal subunit protein uL10 (176 aa).

It belongs to the universal ribosomal protein uL10 family. In terms of assembly, part of the ribosomal stalk of the 50S ribosomal subunit. The N-terminus interacts with L11 and the large rRNA to form the base of the stalk. The C-terminus forms an elongated spine to which L12 dimers bind in a sequential fashion forming a multimeric L10(L12)X complex.

Functionally, forms part of the ribosomal stalk, playing a central role in the interaction of the ribosome with GTP-bound translation factors. This is Large ribosomal subunit protein uL10 from Nocardia farcinica (strain IFM 10152).